Reading from the N-terminus, the 182-residue chain is MRVLGIDPGLRRTGFGVIDAEGMRLRYVASGTIVVPPALSLPERLKVILDNLREVARETRPDVAALEIVFLNTNPASTLLLGQARGAALCALADSALDVHEYTALQIKKAVVGTGRAAKEQVQMMVQRLLSLDGTPAPDSADALACAICHAHVGPLHDRLDRLGTAAQLGSRPRLRNGRLVG.

Residues aspartate 7, glutamate 67, and aspartate 139 contribute to the active site. Mg(2+) contacts are provided by aspartate 7, glutamate 67, and aspartate 139.

This sequence belongs to the RuvC family. In terms of assembly, homodimer which binds Holliday junction (HJ) DNA. The HJ becomes 2-fold symmetrical on binding to RuvC with unstacked arms; it has a different conformation from HJ DNA in complex with RuvA. In the full resolvosome a probable DNA-RuvA(4)-RuvB(12)-RuvC(2) complex forms which resolves the HJ. Requires Mg(2+) as cofactor.

Its subcellular location is the cytoplasm. It carries out the reaction Endonucleolytic cleavage at a junction such as a reciprocal single-stranded crossover between two homologous DNA duplexes (Holliday junction).. In terms of biological role, the RuvA-RuvB-RuvC complex processes Holliday junction (HJ) DNA during genetic recombination and DNA repair. Endonuclease that resolves HJ intermediates. Cleaves cruciform DNA by making single-stranded nicks across the HJ at symmetrical positions within the homologous arms, yielding a 5'-phosphate and a 3'-hydroxyl group; requires a central core of homology in the junction. The consensus cleavage sequence is 5'-(A/T)TT(C/G)-3'. Cleavage occurs on the 3'-side of the TT dinucleotide at the point of strand exchange. HJ branch migration catalyzed by RuvA-RuvB allows RuvC to scan DNA until it finds its consensus sequence, where it cleaves and resolves the cruciform DNA. In Bordetella parapertussis (strain 12822 / ATCC BAA-587 / NCTC 13253), this protein is Crossover junction endodeoxyribonuclease RuvC.